A 241-amino-acid chain; its full sequence is Uridylate kinase (241 aa).

12-15 (KLSG) provides a ligand contact to ATP. Residues 20–25 (GDKGTG) form an involved in allosteric activation by GTP region. Gly54 contributes to the UMP binding site. 2 residues coordinate ATP: Gly55 and Arg59. UMP-binding positions include Asp74 and 135 to 142 (TGSPYFST). ATP contacts are provided by Asn163, Tyr169, and Asp172.

This sequence belongs to the UMP kinase family. As to quaternary structure, homohexamer.

The protein resides in the cytoplasm. The catalysed reaction is UMP + ATP = UDP + ADP. It participates in pyrimidine metabolism; CTP biosynthesis via de novo pathway; UDP from UMP (UMPK route): step 1/1. Its activity is regulated as follows. Allosterically activated by GTP. Inhibited by UTP. Its function is as follows. Catalyzes the reversible phosphorylation of UMP to UDP. This Pediococcus pentosaceus (strain ATCC 25745 / CCUG 21536 / LMG 10740 / 183-1w) protein is Uridylate kinase.